The chain runs to 129 residues: Snaclec coagulation factor IX/factor X-binding protein subunit B3 (129 aa).

A signal peptide spans 1–8 (LSLSGTAA). Cystine bridges form between cysteine 10/cysteine 21, cysteine 38/cysteine 127, and cysteine 104/cysteine 119. Positions 17 to 128 (YEGHCYKPFN…CRMMANFVCE (112 aa)) constitute a C-type lectin domain.

Belongs to the snaclec family. As to quaternary structure, heterodimer of subunits A and B3; disulfide-linked. In terms of tissue distribution, expressed by the venom gland.

It is found in the secreted. Its function is as follows. Anticoagulant protein which binds to the gamma-carboxyglutamic acid-domain regions of factors IX (F9) and factor X (F10) in the presence of calcium with a 1 to 1 stoichiometry. The sequence is that of Snaclec coagulation factor IX/factor X-binding protein subunit B3 from Trimeresurus stejnegeri (Chinese green tree viper).